Here is a 462-residue protein sequence, read N- to C-terminus: NAD-capped RNA hydrolase NUDT12 (462 aa).

ANK repeat units follow at residues 11 to 40, 45 to 74, and 78 to 98; these read EIVT…SLLN, NGWT…DRSI, and SRQT…ANLL. Residue lysine 185 is modified to N6-succinyllysine. The Zn(2+) site is built by cysteine 284 and cysteine 287. An N6-succinyllysine modification is found at lysine 292. Zn(2+)-binding residues include cysteine 302 and cysteine 307. Substrate-binding positions include tyrosine 318, 354–356, glutamate 370, glutamate 374, and glutamate 415; that span reads AGF. The region spanning 319–453 is the Nudix hydrolase domain; sequence PRVDPVVIMQ…SRAIAHQLIK (135 aa). The Mg(2+) site is built by alanine 354, glutamate 370, glutamate 374, and glutamate 415. The short motif at 355–376 is the Nudix box element; that stretch reads GFIEPGETIEDAVRREVEEESG. Residues 460-462 carry the Microbody targeting signal motif; that stretch reads PNL.

It belongs to the Nudix hydrolase family. NudC subfamily. Homodimer. Homodimerization is essential for its catalytic activity and protein stability. Interacts (via ANK repeats) with BLMH. Requires Mg(2+) as cofactor. It depends on Zn(2+) as a cofactor.

The protein resides in the cytoplasm. Its subcellular location is the peroxisome. The protein localises to the cytoplasmic granule. It catalyses the reaction a 5'-end NAD(+)-phospho-ribonucleoside in mRNA + H2O = a 5'-end phospho-adenosine-phospho-ribonucleoside in mRNA + beta-nicotinamide D-ribonucleotide + 2 H(+). The catalysed reaction is NAD(+) + H2O = beta-nicotinamide D-ribonucleotide + AMP + 2 H(+). It carries out the reaction NADH + H2O = reduced beta-nicotinamide D-ribonucleotide + AMP + 2 H(+). The enzyme catalyses NADPH + H2O = reduced beta-nicotinamide D-ribonucleotide + adenosine 2',5'-bisphosphate + 2 H(+). MRNA decapping enzyme that specifically removes the nicotinamide adenine dinucleotide (NAD) cap from a subset of mRNAs by hydrolyzing the diphosphate linkage to produce nicotinamide mononucleotide (NMN) and 5' monophosphate mRNA. The NAD-cap is present at the 5'-end of some RNAs; in contrast to the canonical N7 methylguanosine (m7G) cap, the NAD cap promotes mRNA decay. Preferentially acts on NAD-capped transcripts in response to nutrient stress. Also acts on free nicotinamide adenine dinucleotide molecules: hydrolyzes NAD(H) into NMN(H) and AMP, and NADPH into NMNH and 2',5'-ADP. May act to regulate the concentration of peroxisomal nicotinamide nucleotide cofactors required for oxidative metabolism in this organelle. Regulates the levels of circadian clock components PER1, PER2, PER3 and CRY2 in the liver. This is NAD-capped RNA hydrolase NUDT12 from Homo sapiens (Human).